Reading from the N-terminus, the 425-residue chain is F-box/LRR-repeat protein At3g59250 (425 aa).

The F-box domain occupies 6 to 54 (KDKISNLPEALICHILSFLPIEDSALTSVLSKRWRYLFAFRPNLVFDDS). LRR repeat units lie at residues 86-113 (DLQV…RIES), 138-163 (MLGK…VLNN), 185-210 (CTES…KYSD), 264-293 (CLSA…TIKT), and 294-319 (NQSV…VFEG).

This chain is F-box/LRR-repeat protein At3g59250, found in Arabidopsis thaliana (Mouse-ear cress).